Here is a 281-residue protein sequence, read N- to C-terminus: Glutamate racemase (281 aa).

Substrate is bound by residues 13-14 (DS) and 45-46 (YG). Residue Cys-76 is the Proton donor/acceptor of the active site. 77–78 (NT) is a substrate binding site. Cys-185 functions as the Proton donor/acceptor in the catalytic mechanism. 186–187 (TH) is a binding site for substrate.

This sequence belongs to the aspartate/glutamate racemases family.

It catalyses the reaction L-glutamate = D-glutamate. Its pathway is cell wall biogenesis; peptidoglycan biosynthesis. Functionally, provides the (R)-glutamate required for cell wall biosynthesis. This is Glutamate racemase from Rippkaea orientalis (strain PCC 8801 / RF-1) (Cyanothece sp. (strain PCC 8801)).